Here is a 447-residue protein sequence, read N- to C-terminus: Trigger factor (447 aa).

The region spanning 159 to 244 (GDMLLMQVES…VREIKEEKLP (86 aa)) is the PPIase FKBP-type domain.

This sequence belongs to the FKBP-type PPIase family. Tig subfamily.

The protein localises to the cytoplasm. The catalysed reaction is [protein]-peptidylproline (omega=180) = [protein]-peptidylproline (omega=0). Involved in protein export. Acts as a chaperone by maintaining the newly synthesized protein in an open conformation. Functions as a peptidyl-prolyl cis-trans isomerase. The sequence is that of Trigger factor from Dehalococcoides mccartyi (strain ATCC BAA-2100 / JCM 16839 / KCTC 5957 / BAV1).